Here is a 170-residue protein sequence, read N- to C-terminus: APRG1 tumor suppressor candidate (170 aa).

A helical transmembrane segment spans residues 150–170; that stretch reads IALALAGPGAILILELSWFLG.

Expressed at high levels in the pancreas and placenta. As to expression, expressed at high levels in the kidney.

The protein localises to the membrane. The chain is APRG1 tumor suppressor candidate from Homo sapiens (Human).